We begin with the raw amino-acid sequence, 398 residues long: Probable peptidoglycan glycosyltransferase FtsW (398 aa).

Over 1 to 25 the chain is Cytoplasmic; the sequence is MCYGGTAMMAFADIKEALTPKPSAQ. The helical transmembrane segment at 26 to 46 threads the bilayer; that stretch reads LYDVPLLYCMLMLMGVGFVMV. Topologically, residues 47–69 are periplasmic; that stretch reads TSASMPTADRLFGNIYHFTIRHG. The helical transmembrane segment at 70 to 90 threads the bilayer; sequence IFLALSFCLFWITTSVPMSWW. Residue lysine 91 is a topological domain, cytoplasmic. Residues 92–112 traverse the membrane as a helical segment; sequence KANPYLLLVGLGLLLIVLIVG. The Periplasmic portion of the chain corresponds to 113–120; that stretch reads REVNGSTR. The helical transmembrane segment at 121-141 threads the bilayer; that stretch reads WIPIGPFNIQASELAKLFFFS. The Cytoplasmic segment spans residues 142–156; it reads YISGYLVRKRSEVQE. The helical transmembrane segment at 157-177 threads the bilayer; that stretch reads NIKGFIKPILVFAAYAGLILM. Topologically, residues 178-179 are periplasmic; that stretch reads QP. A helical transmembrane segment spans residues 180–200; the sequence is DLGTVVVMFVTTVGLLFLAGA. Position 201 (lysine 201) is a topological domain, cytoplasmic. A helical membrane pass occupies residues 202-222; the sequence is LWQFFVLILTGVALVIGLIVL. Residues 223-289 lie on the Periplasmic side of the membrane; it reads EPYRMARVIG…DFIFAVIAEE (67 aa). The helical transmembrane segment at 290 to 312 threads the bilayer; that stretch reads LGFVGVSSILIVLGTLVFRALLI. Residues 313–324 lie on the Cytoplasmic side of the membrane; it reads GQNALKNGKEYE. The helical transmembrane segment at 325-345 threads the bilayer; sequence GYLALAIGIWFAFQTMVNVGA. The Periplasmic portion of the chain corresponds to 346 to 356; that stretch reads SAGILPTKGLT. The helical transmembrane segment at 357–377 threads the bilayer; it reads LPFISYGGSSLLMMTIAAGIL. Residues 378-398 are Cytoplasmic-facing; it reads LRVDFETKMATKQATSGGAKR.

This sequence belongs to the SEDS family. FtsW subfamily.

The protein localises to the cell inner membrane. It catalyses the reaction [GlcNAc-(1-&gt;4)-Mur2Ac(oyl-L-Ala-gamma-D-Glu-L-Lys-D-Ala-D-Ala)](n)-di-trans,octa-cis-undecaprenyl diphosphate + beta-D-GlcNAc-(1-&gt;4)-Mur2Ac(oyl-L-Ala-gamma-D-Glu-L-Lys-D-Ala-D-Ala)-di-trans,octa-cis-undecaprenyl diphosphate = [GlcNAc-(1-&gt;4)-Mur2Ac(oyl-L-Ala-gamma-D-Glu-L-Lys-D-Ala-D-Ala)](n+1)-di-trans,octa-cis-undecaprenyl diphosphate + di-trans,octa-cis-undecaprenyl diphosphate + H(+). Its pathway is cell wall biogenesis; peptidoglycan biosynthesis. Peptidoglycan polymerase that is essential for cell division. The sequence is that of Probable peptidoglycan glycosyltransferase FtsW from Pseudoalteromonas translucida (strain TAC 125).